The following is a 560-amino-acid chain: Arginine--tRNA ligase (560 aa).

Positions proline 121–histidine 131 match the 'HIGH' region motif.

This sequence belongs to the class-I aminoacyl-tRNA synthetase family. Monomer.

The protein resides in the cytoplasm. It carries out the reaction tRNA(Arg) + L-arginine + ATP = L-arginyl-tRNA(Arg) + AMP + diphosphate. This is Arginine--tRNA ligase from Exiguobacterium sp. (strain ATCC BAA-1283 / AT1b).